The sequence spans 270 residues: Shikimate dehydrogenase (NADP(+)) (270 aa).

Residues 15–17 (SLS) and threonine 62 contribute to the shikimate site. Catalysis depends on lysine 66, which acts as the Proton acceptor. Residues asparagine 87 and aspartate 102 each coordinate shikimate. NADP(+) is bound by residues 126-130 (GAGGS), 149-154 (NRTVGR), and isoleucine 210. Tyrosine 212 lines the shikimate pocket. Glycine 233 provides a ligand contact to NADP(+).

The protein belongs to the shikimate dehydrogenase family. In terms of assembly, homodimer.

It carries out the reaction shikimate + NADP(+) = 3-dehydroshikimate + NADPH + H(+). It functions in the pathway metabolic intermediate biosynthesis; chorismate biosynthesis; chorismate from D-erythrose 4-phosphate and phosphoenolpyruvate: step 4/7. Functionally, involved in the biosynthesis of the chorismate, which leads to the biosynthesis of aromatic amino acids. Catalyzes the reversible NADPH linked reduction of 3-dehydroshikimate (DHSA) to yield shikimate (SA). The protein is Shikimate dehydrogenase (NADP(+)) of Hyphomonas neptunium (strain ATCC 15444).